Reading from the N-terminus, the 211-residue chain is Uracil phosphoribosyltransferase (211 aa).

5-phospho-alpha-D-ribose 1-diphosphate is bound by residues Arg78, Arg103, and 130–138; that span reads DPMLATGSS. Uracil is bound by residues Ile193 and 198–200; that span reads GDA. A 5-phospho-alpha-D-ribose 1-diphosphate-binding site is contributed by Asp199.

Belongs to the UPRTase family. It depends on Mg(2+) as a cofactor.

It catalyses the reaction UMP + diphosphate = 5-phospho-alpha-D-ribose 1-diphosphate + uracil. It functions in the pathway pyrimidine metabolism; UMP biosynthesis via salvage pathway; UMP from uracil: step 1/1. Its activity is regulated as follows. Allosterically activated by GTP. Functionally, catalyzes the conversion of uracil and 5-phospho-alpha-D-ribose 1-diphosphate (PRPP) to UMP and diphosphate. This Acinetobacter baylyi (strain ATCC 33305 / BD413 / ADP1) protein is Uracil phosphoribosyltransferase.